The sequence spans 248 residues: Tabserin (248 aa).

An N-terminal signal peptide occupies residues 1-19 (MLKYSALFLYLIYVGGSES). Positions 24-248 (IVGGVPVAEE…PYFENGLRKR (225 aa)) constitute a Peptidase S1 domain. A disulfide bridge links Cys-49 with Cys-65. Residues His-64 and Asp-111 each act as charge relay system in the active site. Cystine bridges form between Cys-175/Cys-189 and Cys-201/Cys-226. Catalysis depends on Ser-205, which acts as the Charge relay system.

This sequence belongs to the peptidase S1 family. In terms of tissue distribution, expressed in salivary glands.

The protein resides in the secreted. Functionally, serine protease that inhibits blood coagulation in a dose-dependent manner. May act by destroying coagulant factors to inhibit blood coagulation. The polypeptide is Tabserin (Tabanus yao (Horsefly)).